We begin with the raw amino-acid sequence, 212 residues long: Peptide methionine sulfoxide reductase MsrA (212 aa).

Residue C52 is part of the active site.

This sequence belongs to the MsrA Met sulfoxide reductase family.

It catalyses the reaction L-methionyl-[protein] + [thioredoxin]-disulfide + H2O = L-methionyl-(S)-S-oxide-[protein] + [thioredoxin]-dithiol. It carries out the reaction [thioredoxin]-disulfide + L-methionine + H2O = L-methionine (S)-S-oxide + [thioredoxin]-dithiol. Its function is as follows. Has an important function as a repair enzyme for proteins that have been inactivated by oxidation. Catalyzes the reversible oxidation-reduction of methionine sulfoxide in proteins to methionine. This Salmonella newport (strain SL254) protein is Peptide methionine sulfoxide reductase MsrA.